We begin with the raw amino-acid sequence, 134 residues long: UPF0756 membrane protein YeaL (134 aa).

Transmembrane regions (helical) follow at residues 14–34 (ALGF…LIIV), 51–71 (LTVG…SGTL), 86–106 (LVAI…ITLM), and 110–130 (PQLV…FRGV).

This sequence belongs to the UPF0756 family.

The protein localises to the cell membrane. The chain is UPF0756 membrane protein YeaL from Salmonella typhimurium (strain LT2 / SGSC1412 / ATCC 700720).